Here is a 427-residue protein sequence, read N- to C-terminus: 3-phosphoshikimate 1-carboxyvinyltransferase (427 aa).

3-phosphoshikimate contacts are provided by K20, S21, and R25. K20 lines the phosphoenolpyruvate pocket. The phosphoenolpyruvate site is built by G92 and R120. Positions 165, 167, 313, and 340 each coordinate 3-phosphoshikimate. Phosphoenolpyruvate is bound at residue Q167. The active-site Proton acceptor is the D313. R344 and R388 together coordinate phosphoenolpyruvate.

It belongs to the EPSP synthase family. As to quaternary structure, monomer.

Its subcellular location is the cytoplasm. The enzyme catalyses 3-phosphoshikimate + phosphoenolpyruvate = 5-O-(1-carboxyvinyl)-3-phosphoshikimate + phosphate. Its pathway is metabolic intermediate biosynthesis; chorismate biosynthesis; chorismate from D-erythrose 4-phosphate and phosphoenolpyruvate: step 6/7. Its function is as follows. Catalyzes the transfer of the enolpyruvyl moiety of phosphoenolpyruvate (PEP) to the 5-hydroxyl of shikimate-3-phosphate (S3P) to produce enolpyruvyl shikimate-3-phosphate and inorganic phosphate. The chain is 3-phosphoshikimate 1-carboxyvinyltransferase from Geobacillus kaustophilus (strain HTA426).